We begin with the raw amino-acid sequence, 300 residues long: Probable lipid kinase YegS-like (300 aa).

A DAGKc domain is found at 1–129 (MSKKALLILH…CDVIRVNNHY (129 aa)). Residues Thr38, 64–70 (GDGSVRD), and Thr92 each bind ATP. Mg(2+) contacts are provided by Leu210, Asp213, and Leu215. Glu272 functions as the Proton acceptor in the catalytic mechanism.

Belongs to the diacylglycerol/lipid kinase family. YegS lipid kinase subfamily. It depends on Mg(2+) as a cofactor. Ca(2+) serves as cofactor.

The protein localises to the cytoplasm. Functionally, probably phosphorylates lipids; the in vivo substrate is unknown. The protein is Probable lipid kinase YegS-like of Alcanivorax borkumensis (strain ATCC 700651 / DSM 11573 / NCIMB 13689 / SK2).